A 63-amino-acid polypeptide reads, in one-letter code: Protein D-63 (63 aa).

In terms of assembly, homodimer.

Functionally, this protein may be involved in virus assembly. In Saccharolobus solfataricus (Sulfolobus solfataricus), this protein is Protein D-63.